We begin with the raw amino-acid sequence, 139 residues long: Small ribosomal subunit protein uS12 (139 aa).

Residues 1 to 44 (MPTINQLVRKPRQSKITKSKSPALNKGYNSFKKSLTDVKSPQKR) are disordered. Positions 9–18 (RKPRQSKITK) are enriched in basic residues. Positions 19–39 (SKSPALNKGYNSFKKSLTDVK) are enriched in polar residues. A 3-methylthioaspartic acid modification is found at Asp-102.

Belongs to the universal ribosomal protein uS12 family. In terms of assembly, part of the 30S ribosomal subunit. Contacts proteins S8 and S17. May interact with IF1 in the 30S initiation complex.

Functionally, with S4 and S5 plays an important role in translational accuracy. In terms of biological role, interacts with and stabilizes bases of the 16S rRNA that are involved in tRNA selection in the A site and with the mRNA backbone. Located at the interface of the 30S and 50S subunits, it traverses the body of the 30S subunit contacting proteins on the other side and probably holding the rRNA structure together. The combined cluster of proteins S8, S12 and S17 appears to hold together the shoulder and platform of the 30S subunit. This Lysinibacillus sphaericus (strain C3-41) protein is Small ribosomal subunit protein uS12.